The following is a 147-amino-acid chain: Proteinase inhibitor type-2 (147 aa).

Positions 1–25 (MAVHKEVSFVAYLLIVLGMFLYVDA) are cleaved as a signal peptide. A run of 2 repeats spans residues 25 to 81 (ALGC…DPKN) and 82 to 141 (PKAC…DEPK). 8 disulfides stabilise this stretch: Cys-28/Cys-116, Cys-32/Cys-112, Cys-40/Cys-122, Cys-52/Cys-89, Cys-55/Cys-73, Cys-56/Cys-85, Cys-62/Cys-98, and Cys-115/Cys-133.

Belongs to the protease inhibitor I20 (potato type II proteinase inhibitor) family.

The chain is Proteinase inhibitor type-2 from Solanum tuberosum (Potato).